Here is a 320-residue protein sequence, read N- to C-terminus: ATP-dependent 6-phosphofructokinase isozyme 1 (320 aa).

Gly12 provides a ligand contact to ATP. ADP contacts are provided by residues 22–26 and 55–60; these read RGVVR and RYSVSD. ATP-binding positions include 73–74 and 103–106; these read RF and GDGS. Asp104 provides a ligand contact to Mg(2+). Substrate is bound at residue 126 to 128; the sequence is TID. Asp128 (proton acceptor) is an active-site residue. Residue Arg155 coordinates ADP. Residues Arg163 and 170-172 contribute to the substrate site; that span reads MGR. ADP-binding positions include 186–188, Lys212, and 214–216; these read GCE and KKH. Substrate is bound by residues Glu223, Arg244, and 250–253; that span reads HIQR.

This sequence belongs to the phosphofructokinase type A (PFKA) family. ATP-dependent PFK group I subfamily. Prokaryotic clade 'B1' sub-subfamily. In terms of assembly, homotetramer. Mg(2+) is required as a cofactor.

It is found in the cytoplasm. It catalyses the reaction beta-D-fructose 6-phosphate + ATP = beta-D-fructose 1,6-bisphosphate + ADP + H(+). The protein operates within carbohydrate degradation; glycolysis; D-glyceraldehyde 3-phosphate and glycerone phosphate from D-glucose: step 3/4. Allosterically activated by ADP and other diphosphonucleosides, and allosterically inhibited by phosphoenolpyruvate. In terms of biological role, catalyzes the phosphorylation of D-fructose 6-phosphate to fructose 1,6-bisphosphate by ATP, the first committing step of glycolysis. In Shigella boydii serotype 18 (strain CDC 3083-94 / BS512), this protein is ATP-dependent 6-phosphofructokinase isozyme 1.